We begin with the raw amino-acid sequence, 120 residues long: Large ribosomal subunit protein uL18 (120 aa).

Over residues 1–10 (MKRTRTESVQ) the composition is skewed to basic and acidic residues. A disordered region spans residues 1 to 24 (MKRTRTESVQRRHSRIRRKVEGTP).

This sequence belongs to the universal ribosomal protein uL18 family. As to quaternary structure, part of the 50S ribosomal subunit; part of the 5S rRNA/L5/L18/L25 subcomplex. Contacts the 5S and 23S rRNAs.

This is one of the proteins that bind and probably mediate the attachment of the 5S RNA into the large ribosomal subunit, where it forms part of the central protuberance. The chain is Large ribosomal subunit protein uL18 from Gloeothece citriformis (strain PCC 7424) (Cyanothece sp. (strain PCC 7424)).